Reading from the N-terminus, the 137-residue chain is Large ribosomal subunit protein uL16 (137 aa).

Belongs to the universal ribosomal protein uL16 family. As to quaternary structure, part of the 50S ribosomal subunit.

Functionally, binds 23S rRNA and is also seen to make contacts with the A and possibly P site tRNAs. In Psychrobacter cryohalolentis (strain ATCC BAA-1226 / DSM 17306 / VKM B-2378 / K5), this protein is Large ribosomal subunit protein uL16.